Consider the following 309-residue polypeptide: DNA replication terminus site-binding protein (309 aa).

The protein belongs to the Tus family.

Its subcellular location is the cytoplasm. In terms of biological role, trans-acting protein required for termination of DNA replication. Binds to DNA replication terminator sequences (terA to terF) to prevent the passage of replication forks. The termination efficiency will be affected by the affinity of this protein for the terminator sequence. This is DNA replication terminus site-binding protein from Yersinia enterocolitica serotype O:8 / biotype 1B (strain NCTC 13174 / 8081).